A 55-amino-acid polypeptide reads, in one-letter code: Lantibiotic nisin-U (55 aa).

Residues 1–24 (MNNEDFNLDLIKISKENNSGASPR) constitute a propeptide that is removed on maturation. Thr-26 carries the 2,3-didehydrobutyrine modification. The lanthionine (Ser-Cys) cross-link spans 27–31 (SKSLC). Ser-29 carries the 2,3-didehydroalanine (Ser) modification. Cross-links (beta-methyllanthionine (Thr-Cys)) lie at residues 32–35 (TPGC), 37–43 (TGILMTC), 47–50 (TATC), and 49–52 (TCGC). 2,3-didehydrobutyrine is present on Thr-42.

In terms of processing, maturation of lantibiotics involves the enzymatic conversion of Thr, and Ser into dehydrated AA and the formation of thioether bonds with cysteine. This is followed by membrane translocation and cleavage of the modified precursor.

The protein localises to the secreted. Functionally, lanthionine-containing peptide antibiotic (lantibiotic) active on Gram-positive bacteria. The bactericidal activity of lantibiotics is based on depolarization of energized bacterial cytoplasmic membranes, initiated by the formation of aqueous transmembrane pores. The sequence is that of Lantibiotic nisin-U (nsuA) from Streptococcus uberis.